A 302-amino-acid chain; its full sequence is Urease accessory protein UreD 1 (302 aa).

Belongs to the UreD family. As to quaternary structure, ureD, UreF and UreG form a complex that acts as a GTP-hydrolysis-dependent molecular chaperone, activating the urease apoprotein by helping to assemble the nickel containing metallocenter of UreC. The UreE protein probably delivers the nickel.

The protein localises to the cytoplasm. In terms of biological role, required for maturation of urease via the functional incorporation of the urease nickel metallocenter. The protein is Urease accessory protein UreD 1 of Psychrobacter cryohalolentis (strain ATCC BAA-1226 / DSM 17306 / VKM B-2378 / K5).